Reading from the N-terminus, the 195-residue chain is Nucleoid occlusion factor SlmA (195 aa).

In terms of domain architecture, HTH tetR-type spans 7–67 (TNRRAQILQA…GLIEFIEETL (61 aa)). The segment at residues 30–49 (TTAKLAEKVGVSEAALYRHF) is a DNA-binding region (H-T-H motif). The stretch at 109-141 (DALMGEQDRLRARIAKLFERLETQLKQVLRERK) forms a coiled coil.

This sequence belongs to the nucleoid occlusion factor SlmA family. In terms of assembly, homodimer. Interacts with FtsZ.

The protein resides in the cytoplasm. The protein localises to the nucleoid. Required for nucleoid occlusion (NO) phenomenon, which prevents Z-ring formation and cell division over the nucleoid. Acts as a DNA-associated cell division inhibitor that binds simultaneously chromosomal DNA and FtsZ, and disrupts the assembly of FtsZ polymers. SlmA-DNA-binding sequences (SBS) are dispersed on non-Ter regions of the chromosome, preventing FtsZ polymerization at these regions. The chain is Nucleoid occlusion factor SlmA from Alteromonas mediterranea (strain DSM 17117 / CIP 110805 / LMG 28347 / Deep ecotype).